A 287-amino-acid chain; its full sequence is Elongation factor Ts (287 aa).

The interval 80 to 83 (TDFL) is involved in Mg(2+) ion dislocation from EF-Tu.

Belongs to the EF-Ts family.

The protein localises to the cytoplasm. Associates with the EF-Tu.GDP complex and induces the exchange of GDP to GTP. It remains bound to the aminoacyl-tRNA.EF-Tu.GTP complex up to the GTP hydrolysis stage on the ribosome. The polypeptide is Elongation factor Ts (Pseudomonas putida (strain ATCC 700007 / DSM 6899 / JCM 31910 / BCRC 17059 / LMG 24140 / F1)).